We begin with the raw amino-acid sequence, 52 residues long: UPF0391 membrane protein ACIAD3602 (52 aa).

The next 2 helical transmembrane spans lie at 6-26 and 30-50; these read IIFAVIALIASLLGFGGVAGL and FAVILLVVAVILAIVGFISRG.

The protein belongs to the UPF0391 family.

It localises to the cell membrane. This chain is UPF0391 membrane protein ACIAD3602, found in Acinetobacter baylyi (strain ATCC 33305 / BD413 / ADP1).